The chain runs to 204 residues: CASP-like protein 4B4 (204 aa).

Residues 1–60 (MSAAVAASSGAPAADVEKGAAAADANVDGGGAPAAAAASGEGVVSAVVRRWRRQDLLEKS) are Cytoplasmic-facing. Residues 61–81 (GSALRVAAWAFSLLAFVVMGA) traverse the membrane as a helical segment. The Extracellular segment spans residues 82–98 (NDHGDWRQFEHYEEYRY). Residues 99–119 (VVAIGVLAFIYTTLQLVRHGV) traverse the membrane as a helical segment. At 120–130 (RLTGGQDLQGK) the chain is on the cytoplasmic side. A helical transmembrane segment spans residues 131-151 (VAVLVDFAGDQVTAYLLMSAV). The Extracellular segment spans residues 152 to 175 (SAAIPITNRMREGADNVFTDSSAA). Residues 176 to 196 (SISMAFFAFLCLALSALVSGF) form a helical membrane-spanning segment. Topologically, residues 197-204 (KLAKQTYI) are cytoplasmic.

The protein belongs to the Casparian strip membrane proteins (CASP) family. In terms of assembly, homodimer and heterodimers.

The protein localises to the cell membrane. This chain is CASP-like protein 4B4, found in Oryza sativa subsp. japonica (Rice).